The sequence spans 408 residues: MDKLLERFLHYVSLDTQSKAGVRQVPSTEGQWKLLHLLKQQLEEMGLVNVTLSDKGTVMVTLPANVAGDIPAIGFISHVDTSPDFSGKNVNPQIVENYRGGDIALGIGDEVLSPVMFPVLHQLLGQTLITTDGKTLLGADDKAGVAEIMTALAVLKQKDIPHGDIRVAFTPDEEVGKGAKHFDVEAFGAQWAYTVDGGGVGELEFENFNAASVNIKIVGNNVHPGTAKGVMVNALSLAARIHAEVPADESPETTEGYEGFYHLASMKGTVDRADMHYIIRDFDRKQFEARKRKMMEIAKKVGKGLHPDCYIELVIEDSYYNMREKVVEHPHILDIAQQAMRDCDIVPDMKPIRGGTDGAQLSFMGLPCPNLFTGGYNYHGKHEFVTLEGMEKAVQVIVRIAELTAKQQ.

Position 78 (H78) interacts with Zn(2+). The active site involves D80. D140 is a binding site for Zn(2+). E173 acts as the Proton acceptor in catalysis. E174, D196, and H379 together coordinate Zn(2+).

Belongs to the peptidase M20B family. Zn(2+) is required as a cofactor.

The protein localises to the cytoplasm. It catalyses the reaction Release of the N-terminal residue from a tripeptide.. Its function is as follows. Cleaves the N-terminal amino acid of tripeptides. The polypeptide is Peptidase T (Citrobacter koseri (strain ATCC BAA-895 / CDC 4225-83 / SGSC4696)).